We begin with the raw amino-acid sequence, 474 residues long: MESKALLLVVLGVWLQSLTAFRGGVAAADAGRDFSDIESKFALRTPEDTAEDTCHLIPGLADSVSNCHFNHSSKTFVVIHGWTVTGMYESWVPKLVAALYKREPDSNVIVVDWLYRAQQHYPVSAGYTKLVGNDVARFINWMEEEFNYPLDNVHLLGYSLGAHAAGVAGSLTNKKVNRITGLDPAGPNFEYAEAPSRLSPDDADFVDVLHTFTRGSPGRSIGIQKPVGHVDIYPNGGTFQPGCNIGEAIRVIAERGLGDVDQLVKCSHERSIHLFIDSLLNEENPSKAYRCNSKEAFEKGLCLSCRKNRCNNLGYEINKVRAKRSSKMYLKTRSQMPYKVFHYQVKIHFSGTEDGKQHNQAFEISLYGTVAESENIPFTLPEVSTNKTYSFLIYTEVDIGELLMMKLKWISDSYFSWPDWWSSPSFVIERIRVKAGETQKKVIFCAREKVSHLQKGKDSAVFVKCHDKSLKKSG.

A signal peptide spans 1-27 (MESKALLLVVLGVWLQSLTAFRGGVAA). The interval 32–53 (RDFSDIESKFALRTPEDTAEDT) is interaction with GPIHBP1. Cysteine 54 and cysteine 67 are oxidised to a cystine. Asparagine 70 carries N-linked (GlcNAc...) asparagine glycosylation. Position 121 is a 3'-nitrotyrosine (tyrosine 121). The Nucleophile role is filled by serine 159. Aspartate 183 (charge relay system) is an active-site residue. The residue at position 191 (tyrosine 191) is a 3'-nitrotyrosine. Residues alanine 194, arginine 197, serine 199, and aspartate 202 each contribute to the Ca(2+) site. A disulfide bridge connects residues cysteine 243 and cysteine 266. Residues 243-266 (CNIGEAIRVIAERGLGDVDQLVKC) form an essential for determining substrate specificity region. Histidine 268 functions as the Charge relay system in the catalytic mechanism. Intrachain disulfides connect cysteine 291-cysteine 310 and cysteine 302-cysteine 305. Residues 341 to 464 (FHYQVKIHFS…KGKDSAVFVK (124 aa)) enclose the PLAT domain. Tyrosine 343 bears the 3'-nitrotyrosine mark. Asparagine 386 carries an N-linked (GlcNAc...) asparagine glycan. The tract at residues 417-421 (WPDWW) is important for interaction with lipoprotein particles. The important for heparin binding stretch occupies residues 430-434 (RIRVK). Positions 443-467 (IFCAREKVSHLQKGKDSAVFVKCHD) are interaction with GPIHBP1. Cysteine 445 and cysteine 465 form a disulfide bridge.

It belongs to the AB hydrolase superfamily. Lipase family. In terms of assembly, homodimer. Interacts with GPIHBP1 with 1:1 stoichiometry. Interacts with APOC2; the interaction activates LPL activity in the presence of lipids. Interaction with heparan sulfate proteoglycans is required to protect LPL against loss of activity. Associates with lipoprotein particles in blood plasma. Interacts with LMF1 and SEL1L; interaction with SEL1L is required to prevent aggregation of newly synthesized LPL in the endoplasmic reticulum (ER), and for normal export of LPL from the ER to the extracellular space. Interacts with SORL1; SORL1 acts as a sorting receptor, promoting LPL localization to endosomes and later to lysosomes, leading to degradation of newly synthesized LPL. Tyrosine nitration after lipopolysaccharide (LPS) challenge down-regulates the lipase activity. Post-translationally, N-glycosylated. As to expression, detected in white and brown adipose tissue and heart muscle, especially at the lumenal surface of capillaries. Detected on capillary endothelium in the lactating mammary gland. Detected in blood plasma (at protein level). Expressed in liver, epididymal fat, heart, psoas muscle, lactating mammary gland, adrenal, lung, and ovary. Highest levels in heart and adrenal gland.

The protein resides in the cell membrane. It localises to the secreted. Its subcellular location is the extracellular space. It is found in the extracellular matrix. It catalyses the reaction a triacylglycerol + H2O = a diacylglycerol + a fatty acid + H(+). The enzyme catalyses a 1,2-diacyl-sn-glycero-3-phosphocholine + H2O = a 2-acyl-sn-glycero-3-phosphocholine + a fatty acid + H(+). It carries out the reaction 1,2,3-tri-(9Z-octadecenoyl)-glycerol + H2O = di-(9Z)-octadecenoylglycerol + (9Z)-octadecenoate + H(+). The catalysed reaction is 1,2-di-(9Z-octadecenoyl)-sn-glycero-3-phosphocholine + H2O = (9Z-octadecenoyl)-sn-glycero-3-phosphocholine + (9Z)-octadecenoate + H(+). It catalyses the reaction 1,2,3-tributanoylglycerol + H2O = dibutanoylglycerol + butanoate + H(+). The enzyme catalyses 1,2-dihexadecanoyl-sn-glycero-3-phosphocholine + H2O = hexadecanoyl-sn-glycero-3-phosphocholine + hexadecanoate + H(+). Its activity is regulated as follows. The apolipoprotein APOC2 acts as a coactivator of LPL activity. Ca(2+) binding promotes protein stability and formation of the active homodimer. Interaction with GPIHBP1 protects LPL against inactivation by ANGPTL4. Key enzyme in triglyceride metabolism. Catalyzes the hydrolysis of triglycerides from circulating chylomicrons and very low density lipoproteins (VLDL), and thereby plays an important role in lipid clearance from the blood stream, lipid utilization and storage. Although it has both phospholipase and triglyceride lipase activities it is primarily a triglyceride lipase with low but detectable phospholipase activity. Mediates margination of triglyceride-rich lipoprotein particles in capillaries. Recruited to its site of action on vascular endothelium by binding to GPIHBP1 and cell surface heparan sulfate proteoglycans. This chain is Lipoprotein lipase (Lpl), found in Mus musculus (Mouse).